The primary structure comprises 363 residues: Molybdenum import ATP-binding protein ModC (363 aa).

Residues 1–232 (MLDLDLRRRQ…PGLRPLTGRY (232 aa)) form the ABC transporter domain. An ATP-binding site is contributed by 30-37 (GRSGSGKT). In terms of domain architecture, Mop spans 292-358 (RVSIRNVLPA…IKALTIARGD (67 aa)).

This sequence belongs to the ABC transporter superfamily. Molybdate importer (TC 3.A.1.8) family. As to quaternary structure, the complex is composed of two ATP-binding proteins (ModC), two transmembrane proteins (ModB) and a solute-binding protein (ModA).

It is found in the cell inner membrane. The enzyme catalyses molybdate(out) + ATP + H2O = molybdate(in) + ADP + phosphate + H(+). Its function is as follows. Part of the ABC transporter complex ModABC involved in molybdenum import. Responsible for energy coupling to the transport system. The polypeptide is Molybdenum import ATP-binding protein ModC (Paramagnetospirillum magneticum (strain ATCC 700264 / AMB-1) (Magnetospirillum magneticum)).